Here is a 94-residue protein sequence, read N- to C-terminus: Pyrimidine/purine nucleoside phosphorylase (94 aa).

This sequence belongs to the nucleoside phosphorylase PpnP family.

It catalyses the reaction a purine D-ribonucleoside + phosphate = a purine nucleobase + alpha-D-ribose 1-phosphate. The catalysed reaction is adenosine + phosphate = alpha-D-ribose 1-phosphate + adenine. The enzyme catalyses cytidine + phosphate = cytosine + alpha-D-ribose 1-phosphate. It carries out the reaction guanosine + phosphate = alpha-D-ribose 1-phosphate + guanine. It catalyses the reaction inosine + phosphate = alpha-D-ribose 1-phosphate + hypoxanthine. The catalysed reaction is thymidine + phosphate = 2-deoxy-alpha-D-ribose 1-phosphate + thymine. The enzyme catalyses uridine + phosphate = alpha-D-ribose 1-phosphate + uracil. It carries out the reaction xanthosine + phosphate = alpha-D-ribose 1-phosphate + xanthine. Catalyzes the phosphorolysis of diverse nucleosides, yielding D-ribose 1-phosphate and the respective free bases. Can use uridine, adenosine, guanosine, cytidine, thymidine, inosine and xanthosine as substrates. Also catalyzes the reverse reactions. This is Pyrimidine/purine nucleoside phosphorylase from Pseudomonas putida (strain W619).